The chain runs to 2151 residues: Polycystin-1-like protein 3 (2151 aa).

A signal peptide spans 1–20 (MLLQRRSWLWLYIRIGVILG). The Extracellular segment spans residues 25 to 1073 (RKPSIREQHG…IKLLLHVTNN (1049 aa)). One can recognise a C-type lectin domain in the interval 34–142 (GGNSCYQLNR…CIEKHHFICQ (109 aa)). Intrachain disulfides connect Cys55-Cys141 and Cys116-Cys133. Asn89 carries an N-linked (GlcNAc...) asparagine glycan. The segment covering 222–245 (SLTGRPQVTSDTLASSSPPQGTSD) has biased composition (polar residues). Residues 222-609 (SLTGRPQVTS…SSSPPWPVIT (388 aa)) form a disordered region. Residues 246-348 (TPASSSPPQV…ASSSPPQGTS (103 aa)) are compositionally biased toward low complexity. Polar residues-rich tracts occupy residues 349–363 (DTPA…TLDT) and 371–600 (QGTS…TPAS). N-linked (GlcNAc...) asparagine glycosylation is found at Asn566, Asn579, Asn592, Asn913, and Asn951. The 163-residue stretch at 899–1061 (TSLNTSTDHF…FIVPRTVDVE (163 aa)) folds into the GAIN-B domain. Disulfide bonds link Cys1011–Cys1039 and Cys1026–Cys1041. The GPS stretch occupies residues 1011 to 1061 (CYFWDRYNRTWKSDGCQVGPKSTILKTQCLCDHLTFFSSDFFIVPRTVDVE). The tract at residues 1045–1061 (TFFSSDFFIVPRTVDVE) is stachel. A helical membrane pass occupies residues 1074–1094 (PVGVSLLSSLLGFYILLAMWA). Over 1095–1283 (SRKDREDMQK…NQFTRVQRLS (189 aa)) the chain is Cytoplasmic. Positions 1119–1236 (SHYLIQVYTG…GNCERDRVFT (118 aa)) constitute a PLAT domain. A helical transmembrane segment spans residues 1284–1304 (CCMALLLCDMVINIMFWKMGG). Residues 1305 to 1320 (TTAKRGTEQLGPLAVT) lie on the Extracellular side of the membrane. A helical membrane pass occupies residues 1321–1341 (LSELLVSIQTSIILFPIHLIF). Over 1342–1533 (GRLFQLIHPP…FCLFRWLKCS (192 aa)) the chain is Cytoplasmic. Residues 1534 to 1554 (CWLLLGVISLASAFFITLYSL) traverse the membrane as a helical segment. The Extracellular segment spans residues 1555–1575 (ELDKDQATSWVISMMLSVLQD). A helical membrane pass occupies residues 1576–1596 (IFISQPIKVIFLTLLFSLMAN). The Cytoplasmic portion of the chain corresponds to 1597 to 1665 (HMPWLNKDKE…KLTGGTLVQI (69 aa)). The chain crosses the membrane as a helical span at residues 1666 to 1676 (LFLTLLMTTVY). The Extracellular segment spans residues 1677-1892 (SAKDSSRFFL…SLTSLQSSER (216 aa)). Asn1712 and Asn1822 each carry an N-linked (GlcNAc) asparagine glycan. Residues 1893 to 1921 (GFAWIVSQVVYYLLVCYYAFIQGCRLKRQ) form a helical membrane-spanning segment. Residues 1922 to 1930 (RLAFFTRKR) lie on the Cytoplasmic side of the membrane. The helical transmembrane segment at 1931 to 1949 (NLLDTSIVLISFSILGLSM) threads the bilayer. Over 1950–1980 (QSLSLLHKKMQQYHCDRDRFISFYEALRVNS) the chain is Extracellular. The chain crosses the membrane as a helical span at residues 1981–2002 (AVTHLRGFLLLFATVRVWDLLR). Over 2003 to 2019 (HHAQLQVINKTLSKAWD) the chain is Cytoplasmic. A helical transmembrane segment spans residues 2020–2044 (EVLGFILIIVVLLSSYAMTFNLLFG). The tract at residues 2043–2081 (FGWSISDYQSFFRSIVTVVGLLMGTSKHKEVIALYPILG) is channel pore-region. Over 2045–2077 (WSISDYQSFFRSIVTVVGLLMGTSKHKEVIALY) the chain is Extracellular. The helical transmembrane segment at 2078–2097 (PILGSLLVLSSIILMGLVII) threads the bilayer. The Cytoplasmic segment spans residues 2098–2151 (NLFVSAILIAFGKERKACEKEATLTDMLLQKLSSLLGIRLHQNPSEEHADNTGY).

This sequence belongs to the polycystin family. Heterotetramer with PKD2L1, composed of 3 subunit of PKD2L1 and 1 subunit of PKD1L3. Post-translationally, autoproteolytically processed at the GPS region of the GAIN-B domain; this cleavage modulates receptor activity. In terms of tissue distribution, expressed in a subset of taste receptor cells (type III taste cells) distinct from those involved in bitter, sweet and umami taste. Expressed in circumvallate and foliate taste buds, but not in surrounding non-gustatory lingual epithelium cells. Expressed in testis.

The protein localises to the cell membrane. The catalysed reaction is Ca(2+)(in) = Ca(2+)(out). It catalyses the reaction Na(+)(in) = Na(+)(out). It carries out the reaction K(+)(in) = K(+)(out). The enzyme catalyses Mg(2+)(in) = Mg(2+)(out). With respect to regulation, the non-selective cation channel is gated following an off-response property by acid: gated open after the removal of acid stimulus, but not during acid application. Non-selective cation channel activity is inhibited by capsaicin. Regulation of non-selective cation channel activity by external Ca(2+) is bimodal, first sensitizing and subsequently inactivating the current. The apo (closed) heterotetramer has an asymmetric selectivity filter (SF) guarded by Lys-2069 in absence of Ca(2+). However, Ca(2+)-entrance to the SF vestibule is accompanied by a swing motion of Lys-2069 on PKD1L3. In terms of biological role, pore-forming subunit of a heterotetrameric, non-selective cation channel that is permeable to Ca(2+). Also shows permeability towards NA(1+), K(+) and Mg(2+). Heterotetrameric complex channel is activated by external low pH and Ca(2+), but opens only when the extracellular pH rises again and after the removal of acid stimulus. May act as a sour taste receptor in gustatory cells; however, its contribution to sour taste perception is unclear in vivo and may be indirect. This Mus musculus (Mouse) protein is Polycystin-1-like protein 3.